We begin with the raw amino-acid sequence, 220 residues long: Redox-sensing transcriptional repressor Rex (220 aa).

The H-T-H motif DNA-binding region spans 16-55 (MYVQVLETLKREGSQVVSSELLARTCSVNPSQIRKDLAYF). 90-95 (GIGNLG) contacts NAD(+).

Belongs to the transcriptional regulatory Rex family. As to quaternary structure, homodimer.

Its subcellular location is the cytoplasm. Modulates transcription in response to changes in cellular NADH/NAD(+) redox state. The sequence is that of Redox-sensing transcriptional repressor Rex from Solidesulfovibrio magneticus (strain ATCC 700980 / DSM 13731 / RS-1) (Desulfovibrio magneticus).